Reading from the N-terminus, the 608-residue chain is Pentatricopeptide repeat-containing protein 1, apicoplast (608 aa).

PPR repeat units follow at residues 165-199, 200-230, 236-270, 336-370, 372-402, 410-445, and 446-480; these read TTLA…NIKP, DLVS…MIES, NYEI…PFVE, QYSE…GKYM, SIFV…LKND, NVNI…LLTP, and NNLS…KLLN.

It belongs to the PPR family. P subfamily. In terms of assembly, homodimer.

Its subcellular location is the plastid. It is found in the apicoplast. Its function is as follows. Binds to apicoplast RNA transcripts, preferentially to the motif UUAU, and protects RNA transcripts from degradation by ribonuclease. The chain is Pentatricopeptide repeat-containing protein 1, apicoplast from Plasmodium falciparum (isolate 3D7).